The chain runs to 533 residues: Probable nucleolar protein 5-1 (533 aa).

The Nop domain occupies 280-398 (IAPNLTALVG…LEARLRTLEG (119 aa)). Residues 402–533 (GRLSGSAKGK…EKKKKKKTEV (132 aa)) are disordered. Residues 412 to 423 (PKIEVYDKDKKK) are compositionally biased toward basic and acidic residues. The span at 433–450 (KTYNTAADSLLQTPTVDS) shows a compositional bias: polar residues. Basic and acidic residues-rich tracts occupy residues 474–489 (TEEPSKKKSNKKKTEA) and 515–524 (MPAKKKEKSE).

This sequence belongs to the NOP5/NOP56 family.

It is found in the nucleus. Its subcellular location is the nucleolus. In terms of biological role, required for 60S ribosomal subunit biogenesis. The chain is Probable nucleolar protein 5-1 (NOP5-1) from Arabidopsis thaliana (Mouse-ear cress).